A 186-amino-acid chain; its full sequence is Tumor necrosis factor alpha-induced protein 8-like protein 1 (186 aa).

Positions 37–70 form a coiled coil; sequence EVLDELYRVTKEYTRNRKEAQKIIKNLIKMVVKL.

It belongs to the TNFAIP8 family.

It is found in the cytoplasm. This chain is Tumor necrosis factor alpha-induced protein 8-like protein 1 (tnfaip8l1), found in Danio rerio (Zebrafish).